The following is a 595-amino-acid chain: Beta-(1--&gt;2)glucan export ATP-binding/permease protein NdvA (595 aa).

In terms of domain architecture, ABC transmembrane type-1 spans 21 to 301 (SLLICSANVM…MSNFINLTIS (281 aa)). 5 helical membrane passes run 22–42 (LLICSANVMLAIITIAEPILF), 55–75 (IIPTLTIWVCFGISHILAYVL), 129–149 (IWLDFMRQHLSTLVALFVLIP), 152–172 (FNMNWRLSIVLVVLAIIYVLI), and 248–268 (MASTISIVCVLLLGAFFVAKG). The 235-residue stretch at 335 to 569 (IQFHHVTYKF…GGRFYKLLKA (235 aa)) folds into the ABC transporter domain. Position 368–375 (368–375 (GPTGAGKT)) interacts with ATP.

Belongs to the ABC transporter superfamily. Beta-(1--&gt;2)glucan exporter (TC 3.A.1.108.1) family. In terms of assembly, homodimer.

It localises to the cell inner membrane. It catalyses the reaction [(1-&gt;2)-beta-D-glucosyl](n)(in) + ATP + H2O = [(1-&gt;2)-beta-D-glucosyl](n)(out) + ADP + phosphate + H(+). In terms of biological role, involved in beta-(1--&gt;2)glucan export. Transmembrane domains (TMD) form a pore in the inner membrane and the ATP-binding domain (NBD) is responsible for energy generation. This is Beta-(1--&gt;2)glucan export ATP-binding/permease protein NdvA from Bartonella henselae (strain ATCC 49882 / DSM 28221 / CCUG 30454 / Houston 1) (Rochalimaea henselae).